A 32-amino-acid polypeptide reads, in one-letter code: Phospholipase A2 (32 aa).

3 residues coordinate Ca(2+): tyrosine 16, glycine 18, and glycine 20.

Requires Ca(2+) as cofactor. As to expression, expressed by the venom gland.

The protein localises to the secreted. It catalyses the reaction a 1,2-diacyl-sn-glycero-3-phosphocholine + H2O = a 1-acyl-sn-glycero-3-phosphocholine + a fatty acid + H(+). In terms of biological role, PLA2 catalyzes the calcium-dependent hydrolysis of the 2-acyl groups in 3-sn-phosphoglycerides. This chain is Phospholipase A2, found in Micrurus lemniscatus (South American coral snake).